The chain runs to 117 residues: Large ribosomal subunit protein uL18 (117 aa).

It belongs to the universal ribosomal protein uL18 family. As to quaternary structure, part of the 50S ribosomal subunit; part of the 5S rRNA/L5/L18/L25 subcomplex. Contacts the 5S and 23S rRNAs.

This is one of the proteins that bind and probably mediate the attachment of the 5S RNA into the large ribosomal subunit, where it forms part of the central protuberance. This Glaesserella parasuis serovar 5 (strain SH0165) (Haemophilus parasuis) protein is Large ribosomal subunit protein uL18.